A 108-amino-acid polypeptide reads, in one-letter code: ATP-dependent Clp protease adapter protein ClpS (108 aa).

The protein belongs to the ClpS family. Binds to the N-terminal domain of the chaperone ClpA.

Functionally, involved in the modulation of the specificity of the ClpAP-mediated ATP-dependent protein degradation. This is ATP-dependent Clp protease adapter protein ClpS from Leptospira borgpetersenii serovar Hardjo-bovis (strain JB197).